Reading from the N-terminus, the 55-residue chain is ATP synthase F(0) complex subunit 8 (55 aa).

A helical transmembrane segment spans residues 4 to 24; that stretch reads LNPHPWFSIFITSWLILIIIL.

It belongs to the ATPase protein 8 family. In terms of assembly, component of the ATP synthase complex composed at least of ATP5F1A/subunit alpha, ATP5F1B/subunit beta, ATP5MC1/subunit c (homooctomer), MT-ATP6/subunit a, MT-ATP8/subunit 8, ATP5ME/subunit e, ATP5MF/subunit f, ATP5MG/subunit g, ATP5MK/subunit k, ATP5MJ/subunit j, ATP5F1C/subunit gamma, ATP5F1D/subunit delta, ATP5F1E/subunit epsilon, ATP5PF/subunit F6, ATP5PB/subunit b, ATP5PD/subunit d, ATP5PO/subunit OSCP. ATP synthase complex consists of a soluble F(1) head domain (subunits alpha(3) and beta(3)) - the catalytic core - and a membrane F(0) domain - the membrane proton channel (subunits c, a, 8, e, f, g, k and j). These two domains are linked by a central stalk (subunits gamma, delta, and epsilon) rotating inside the F1 region and a stationary peripheral stalk (subunits F6, b, d, and OSCP).

It localises to the mitochondrion membrane. Its function is as follows. Subunit 8, of the mitochondrial membrane ATP synthase complex (F(1)F(0) ATP synthase or Complex V) that produces ATP from ADP in the presence of a proton gradient across the membrane which is generated by electron transport complexes of the respiratory chain. ATP synthase complex consist of a soluble F(1) head domain - the catalytic core - and a membrane F(1) domain - the membrane proton channel. These two domains are linked by a central stalk rotating inside the F(1) region and a stationary peripheral stalk. During catalysis, ATP synthesis in the catalytic domain of F(1) is coupled via a rotary mechanism of the central stalk subunits to proton translocation. In vivo, can only synthesize ATP although its ATP hydrolase activity can be activated artificially in vitro. Part of the complex F(0) domain. The sequence is that of ATP synthase F(0) complex subunit 8 from Pelomedusa subrufa (African side-necked turtle).